A 612-amino-acid polypeptide reads, in one-letter code: MCGIVGAIRAHHNVVDFLTDGLKRLEYRGYDSSGIAVNTDGKIKRVRRVGRVQLMEDAAREKGISGGIGIGHTRWATHGGVTEPNAHPHISGGMIAVVHNGIIENFESERKRLEGLGYRFESQTDTEVIAHSINHEYAQNGGRLFEAVQEAVKRFHGAYAIAVIAQDKPDELVVARMGCPLLVALGDDETFIASDVSAVIAFTRRVAYLEDGDIALLASDGIKRLTDKNGLPAERKVKVSELSLASLELGLYSHFMQKEIHEQPRAIADTAEVFLDGGFIPENFGKDAKSVFESIRSVKILACGTSYYAALTAKYWLESIAKIPSDVEIASEYRYRSVIADSDQLVITISQSGETLDTMEALKYAKSLGHRHSLSICNVMESALPRESSLVLYTRAGAEIGVASTKAFTTQLVALFGLAVTLAKVRGLVSEEDEARYTEELRQLPGSVQHALNLEPQIAAWAQQFAKKTSALFLGRGIHYPIALEGALKLKEITYIHAEAYPAGELKHGPLALVDENMPVVVIAPNDSLLDKVKANMQEVGARGGELFVFADLDSNFNATEGVHVIRAPRHVGKLSPVVHTIPVQLLAYHTALARGTDVDKPRNLAKSVTVE.

The active-site Nucleophile; for GATase activity is the C2. Residues 2–220 (CGIVGAIRAH…DGDIALLASD (219 aa)) enclose the Glutamine amidotransferase type-2 domain. SIS domains are found at residues 288 to 428 (AKSV…VRGL) and 461 to 602 (WAQQ…VDKP). K607 acts as the For Fru-6P isomerization activity in catalysis.

As to quaternary structure, homodimer.

The protein localises to the cytoplasm. The enzyme catalyses D-fructose 6-phosphate + L-glutamine = D-glucosamine 6-phosphate + L-glutamate. Functionally, catalyzes the first step in hexosamine metabolism, converting fructose-6P into glucosamine-6P using glutamine as a nitrogen source. This chain is Glutamine--fructose-6-phosphate aminotransferase [isomerizing], found in Neisseria meningitidis serogroup B (strain ATCC BAA-335 / MC58).